A 225-amino-acid polypeptide reads, in one-letter code: UPF0758 protein Shal_0429 (225 aa).

The region spanning 102-224 (ILSDPDLTRD…IVSFAERGWI (123 aa)) is the MPN domain. The Zn(2+) site is built by histidine 173, histidine 175, and aspartate 186. The short motif at 173-186 (HNHPSGIAEPSTAD) is the JAMM motif element.

It belongs to the UPF0758 family.

The sequence is that of UPF0758 protein Shal_0429 from Shewanella halifaxensis (strain HAW-EB4).